Reading from the N-terminus, the 360-residue chain is Phospho-N-acetylmuramoyl-pentapeptide-transferase (360 aa).

Helical transmembrane passes span 27–47, 73–93, 98–118, 134–154, 168–188, 199–219, 239–259, 263–283, 288–308, and 337–357; these read GAVMTAMLVAFVFGPGIIEWL, TMGGIMILLGVGVATLLWADL, VWAVLLLTLGYGAIGFADDYL, LVAQVGMAVIAGLWIMLLGQG, LTFNLGWFYLPFAAFVMVGAS, GLAIVPVMIAAGVFMLIAYLV, LAVFCGAIVGAAVGFLWFNAP, VFMGDTGSLALGGALGAVSVV, IVLAIVGGLFVLETVSVIVQV, and TVVIRFWIIAMILAIVGLSTL.

This sequence belongs to the glycosyltransferase 4 family. MraY subfamily. Mg(2+) serves as cofactor.

It localises to the cell inner membrane. It carries out the reaction UDP-N-acetyl-alpha-D-muramoyl-L-alanyl-gamma-D-glutamyl-meso-2,6-diaminopimeloyl-D-alanyl-D-alanine + di-trans,octa-cis-undecaprenyl phosphate = di-trans,octa-cis-undecaprenyl diphospho-N-acetyl-alpha-D-muramoyl-L-alanyl-D-glutamyl-meso-2,6-diaminopimeloyl-D-alanyl-D-alanine + UMP. The protein operates within cell wall biogenesis; peptidoglycan biosynthesis. Catalyzes the initial step of the lipid cycle reactions in the biosynthesis of the cell wall peptidoglycan: transfers peptidoglycan precursor phospho-MurNAc-pentapeptide from UDP-MurNAc-pentapeptide onto the lipid carrier undecaprenyl phosphate, yielding undecaprenyl-pyrophosphoryl-MurNAc-pentapeptide, known as lipid I. The protein is Phospho-N-acetylmuramoyl-pentapeptide-transferase of Rhodospirillum rubrum (strain ATCC 11170 / ATH 1.1.1 / DSM 467 / LMG 4362 / NCIMB 8255 / S1).